The chain runs to 378 residues: MTDPPALSALTTMRVGGTPERLLEPADRDALVATAREVWSTGDEWLLLGGGSNTIAADDGFEGTVLRIVTRGVERLAAEKGRIRLRVQAGEPWDALVALTVRNGWAGIEALSGIPGSTGAAPVQNIGAYGQEIESALIGVEFLDYLTGEVYTLARAELGLGYRTSALKRGMAGVVLSVDLELADHSVPGGVGASLSAPIAYAQLADALAVPLGSRVSVDELRRAVLALRASKGMVLDPADPDSVSAGSFFTNPIVSENVARALPSDAPRWSLGPPEPDTILSLGPEGVHPLDVPPFAAGPYEAKLSAAWLIENAGIRSGFALPGSGAAISSKHTLAIVNRGAATAADVAQLASFVRGRVQADFGVVLHPEPVLVGLTL.

In terms of domain architecture, FAD-binding PCMH-type spans 15-185 (VGGTPERLLE…LSVDLELADH (171 aa)). Arginine 163 is an active-site residue. Serine 248 acts as the Proton donor in catalysis. The active site involves glutamate 370.

The protein belongs to the MurB family. It depends on FAD as a cofactor.

The protein resides in the cytoplasm. It catalyses the reaction UDP-N-acetyl-alpha-D-muramate + NADP(+) = UDP-N-acetyl-3-O-(1-carboxyvinyl)-alpha-D-glucosamine + NADPH + H(+). Its pathway is cell wall biogenesis; peptidoglycan biosynthesis. Its function is as follows. Cell wall formation. This chain is UDP-N-acetylenolpyruvoylglucosamine reductase, found in Leifsonia xyli subsp. xyli (strain CTCB07).